A 286-amino-acid polypeptide reads, in one-letter code: 33 kDa chaperonin (286 aa).

Disulfide bonds link Cys225/Cys227 and Cys258/Cys261.

The protein belongs to the HSP33 family. Under oxidizing conditions two disulfide bonds are formed involving the reactive cysteines. Under reducing conditions zinc is bound to the reactive cysteines and the protein is inactive.

It is found in the cytoplasm. Functionally, redox regulated molecular chaperone. Protects both thermally unfolding and oxidatively damaged proteins from irreversible aggregation. Plays an important role in the bacterial defense system toward oxidative stress. The chain is 33 kDa chaperonin from Shewanella woodyi (strain ATCC 51908 / MS32).